The primary structure comprises 436 residues: Glutamyl-tRNA reductase (436 aa).

Substrate-binding positions include 50–53 (TCNR), Ser-110, 115–117 (ETQ), and Gln-121. Catalysis depends on Cys-51, which acts as the Nucleophile. 190–195 (GLGEMS) lines the NADP(+) pocket.

It belongs to the glutamyl-tRNA reductase family. As to quaternary structure, homodimer.

The enzyme catalyses (S)-4-amino-5-oxopentanoate + tRNA(Glu) + NADP(+) = L-glutamyl-tRNA(Glu) + NADPH + H(+). The protein operates within porphyrin-containing compound metabolism; protoporphyrin-IX biosynthesis; 5-aminolevulinate from L-glutamyl-tRNA(Glu): step 1/2. In terms of biological role, catalyzes the NADPH-dependent reduction of glutamyl-tRNA(Glu) to glutamate 1-semialdehyde (GSA). This Wolinella succinogenes (strain ATCC 29543 / DSM 1740 / CCUG 13145 / JCM 31913 / LMG 7466 / NCTC 11488 / FDC 602W) (Vibrio succinogenes) protein is Glutamyl-tRNA reductase.